Here is a 622-residue protein sequence, read N- to C-terminus: Meiotic expression up-regulated protein 25 (622 aa).

This Schizosaccharomyces pombe (strain 972 / ATCC 24843) (Fission yeast) protein is Meiotic expression up-regulated protein 25 (meu25).